The chain runs to 70 residues: Cold shock-like protein CspJ (70 aa).

The 61-residue stretch at 7–67 folds into the CSD domain; that stretch reads GLVKWFNPEK…GPKGPSAVNV (61 aa).

It is found in the cytoplasm. This Salmonella typhimurium (strain SL1344) protein is Cold shock-like protein CspJ (cspJ).